A 337-amino-acid polypeptide reads, in one-letter code: Methylthioribose-1-phosphate isomerase (337 aa).

Residues 47–49 (RGA), R81, and Q184 contribute to the substrate site. D225 functions as the Proton donor in the catalytic mechanism. Residue 235–236 (NK) participates in substrate binding.

This sequence belongs to the eIF-2B alpha/beta/delta subunits family. MtnA subfamily.

The enzyme catalyses 5-(methylsulfanyl)-alpha-D-ribose 1-phosphate = 5-(methylsulfanyl)-D-ribulose 1-phosphate. Its pathway is amino-acid biosynthesis; L-methionine biosynthesis via salvage pathway; L-methionine from S-methyl-5-thio-alpha-D-ribose 1-phosphate: step 1/6. In terms of biological role, catalyzes the interconversion of methylthioribose-1-phosphate (MTR-1-P) into methylthioribulose-1-phosphate (MTRu-1-P). The polypeptide is Methylthioribose-1-phosphate isomerase (Parasynechococcus marenigrum (strain WH8102)).